A 639-amino-acid polypeptide reads, in one-letter code: Developmental regulatory protein wetA (639 aa).

4 disordered regions span residues 65–97 (MDPS…EFDF), 206–369 (TTMR…SAAS), 418–552 (GLLI…SADE), and 587–613 (LMTG…RRRR). A compositionally biased stretch (basic residues) spans 69–78 (HHHHHPHHHA). Composition is skewed to polar residues over residues 81–90 (ESSTTSSGVS) and 214–226 (VSQT…SPSM). The span at 246 to 255 (RGRRAHRAHT) shows a compositional bias: basic residues. Composition is skewed to low complexity over residues 256–275 (QHAL…QAHQ), 346–369 (QQQW…SAAS), and 506–526 (HSSG…RVSV).

It belongs to the wetA family.

Functionally, brlA, abaA and wetA are pivotal regulators of conidiophore development and conidium maturation. They act individually and together to regulate their own expression and that of numerous other sporulation-specific genes. Acts as a crucial regulator of both conidiation capacity and conidial quality. Plays a role in virulence. The protein is Developmental regulatory protein wetA of Beauveria bassiana (strain ARSEF 2860) (White muscardine disease fungus).